Reading from the N-terminus, the 462-residue chain is Sensor histidine kinase ZraS (462 aa).

The Cytoplasmic segment spans residues 1–14 (MNVMRLSKDSVAVG). Residues 15 to 35 (LSWLLTGLILLLVCLFSALIV) form a helical membrane-spanning segment. Residues 36-197 (RDYGRENEAA…ADHARGLRNM (162 aa)) are Periplasmic-facing. The chain crosses the membrane as a helical span at residues 198–218 (VIMLCAAGVVMAATVLAQFWF). At 219 to 462 (RRYQRSRKQL…VNGQQKDEQG (244 aa)) the chain is on the cytoplasmic side. In terms of domain architecture, Histidine kinase spans 247-455 (GVAHEIRNPL…LFTFYLPVNG (209 aa)). His250 is subject to Phosphohistidine; by autocatalysis.

Post-translationally, autophosphorylated.

The protein localises to the cell inner membrane. The catalysed reaction is ATP + protein L-histidine = ADP + protein N-phospho-L-histidine.. With respect to regulation, activity of the ZraS/ZraR two-component system is repressed by the zinc-bound form of ZraP, which probably interacts with the periplasmic region of ZraS. In terms of biological role, part of the Zra signaling pathway, an envelope stress response (ESR) system composed of the periplasmic accessory protein ZraP, the histidine kinase ZraS and the transcriptional regulator ZraR. The ZraPSR system contributes to antibiotic resistance and is important for membrane integrity in the presence of membrane-targeting biocides. ZraS is a member of the two-component regulatory system ZraS/ZraR. Functions as a membrane-associated sensor kinase that phosphorylates ZraR in response to high concentrations of Zn(2+) or Pb(2+) in the medium. The polypeptide is Sensor histidine kinase ZraS (zraS) (Klebsiella oxytoca).